Reading from the N-terminus, the 377-residue chain is tRNA-specific 2-thiouridylase MnmA (377 aa).

ATP is bound by residues 17–24 and M43; that span reads GMSGGVDS. The segment at 103 to 105 is interaction with target base in tRNA; that stretch reads NPD. C108 (nucleophile) is an active-site residue. A disulfide bridge links C108 with C204. ATP is bound at residue G132. Residues 154–156 form an interaction with tRNA region; it reads KDQ. Catalysis depends on C204, which acts as the Cysteine persulfide intermediate. Positions 316 to 317 are interaction with tRNA; sequence RY.

The protein belongs to the MnmA/TRMU family.

It is found in the cytoplasm. It carries out the reaction S-sulfanyl-L-cysteinyl-[protein] + uridine(34) in tRNA + AH2 + ATP = 2-thiouridine(34) in tRNA + L-cysteinyl-[protein] + A + AMP + diphosphate + H(+). Its function is as follows. Catalyzes the 2-thiolation of uridine at the wobble position (U34) of tRNA, leading to the formation of s(2)U34. The sequence is that of tRNA-specific 2-thiouridylase MnmA from Pseudomonas fluorescens (strain ATCC BAA-477 / NRRL B-23932 / Pf-5).